A 252-amino-acid chain; its full sequence is Phosphate import ATP-binding protein PstB (252 aa).

An ABC transporter domain is found at 5-247 (VKIDKLNVHF…PEKKQTEDYI (243 aa)). 37–44 (GPSGCGKS) provides a ligand contact to ATP.

It belongs to the ABC transporter superfamily. Phosphate importer (TC 3.A.1.7) family. The complex is composed of two ATP-binding proteins (PstB), two transmembrane proteins (PstC and PstA) and a solute-binding protein (PstS).

The protein localises to the cell inner membrane. It catalyses the reaction phosphate(out) + ATP + H2O = ADP + 2 phosphate(in) + H(+). Its function is as follows. Part of the ABC transporter complex PstSACB involved in phosphate import. Responsible for energy coupling to the transport system. This Geobacter metallireducens (strain ATCC 53774 / DSM 7210 / GS-15) protein is Phosphate import ATP-binding protein PstB.